Consider the following 780-residue polypeptide: TSC22 domain family protein 2 (780 aa).

Disordered regions lie at residues Ala20–Pro86, Thr126–Cys158, Ala235–Pro499, Leu587–Ser607, and Leu736–Ala780. Positions Glu28–Asp37 are enriched in acidic residues. A compositionally biased stretch (low complexity) spans Thr126–Pro146. Positions Gly241–Thr262 are enriched in polar residues. 3 stretches are compositionally biased toward low complexity: residues Gly297–Gly316, Pro344–Gln361, and Gln395–Pro412. A compositionally biased stretch (polar residues) spans Thr415 to Ser434. Low complexity predominate over residues Gln453–Pro468. Residues Leu736–Ser756 are compositionally biased toward polar residues. Residues Pro765–Gln774 show a composition bias toward pro residues.

The protein belongs to the TSC-22/Dip/Bun family. Interacts with NRBP1. Interacts with PKM isoform M2; the interaction results in reduced nuclear levels of PKM isoform M2, leading to repression of cyclin CCND1 transcription and reduced cell growth. Interacts with WDR77.

In terms of biological role, reduces the level of nuclear PKM isoform M2 which results in repression of cyclin CCND1 transcription and reduced cell growth. The chain is TSC22 domain family protein 2 from Homo sapiens (Human).